Reading from the N-terminus, the 539-residue chain is T-complex protein 1 subunit delta (539 aa).

The tract at residues 1 to 29 (MPENVAPRSGATAGAAGGRGKGAYQDRDK) is disordered. Residue Arg19 is modified to Omega-N-methylarginine. Lys21 carries the post-translational modification N6-acetyllysine. The residue at position 36 (Ser36) is a Phosphoserine. ADP is bound at residue Gly53. Gly53 serves as a coordination point for ATP. A Mg(2+)-binding site is contributed by Asp104. ADP contacts are provided by Gly105, Thr106, Thr107, Ser108, Asn172, Ser173, and Lys174. Gly105 and Thr106 together coordinate ATP. Lys174 is an ATP binding site. 2 positions are modified to phosphoserine: Ser184 and Ser202. Lys288, Lys302, Lys319, and Lys326 each carry N6-acetyllysine. Gly425 contributes to the ADP binding site. A Phosphoserine modification is found at Ser444. Position 510 (Gln510) interacts with ADP.

This sequence belongs to the TCP-1 chaperonin family. Component of the chaperonin-containing T-complex (TRiC), a hexadecamer composed of two identical back-to-back stacked rings enclosing a protein folding chamber. Each ring is made up of eight different subunits: TCP1/CCT1, CCT2, CCT3, CCT4, CCT5, CCT6A/CCT6, CCT7, CCT8. Interacts with PACRG. Interacts with DNAAF4. Interacts with DLEC1.

The protein localises to the cytoplasm. It localises to the melanosome. Its subcellular location is the cytoskeleton. It is found in the microtubule organizing center. The protein resides in the centrosome. The protein localises to the cilium basal body. It catalyses the reaction ATP + H2O = ADP + phosphate + H(+). Functionally, component of the chaperonin-containing T-complex (TRiC), a molecular chaperone complex that assists the folding of actin, tubulin and other proteins upon ATP hydrolysis. The TRiC complex mediates the folding of WRAP53/TCAB1, thereby regulating telomere maintenance. As part of the TRiC complex may play a role in the assembly of BBSome, a complex involved in ciliogenesis regulating transports vesicles to the cilia. The protein is T-complex protein 1 subunit delta (CCT4) of Homo sapiens (Human).